Here is a 265-residue protein sequence, read N- to C-terminus: Hydroxyethylthiazole kinase (265 aa).

Met43 lines the substrate pocket. ATP is bound by residues Arg119 and Ser165. Ala192 is a substrate binding site.

This sequence belongs to the Thz kinase family. It depends on Mg(2+) as a cofactor.

The enzyme catalyses 5-(2-hydroxyethyl)-4-methylthiazole + ATP = 4-methyl-5-(2-phosphooxyethyl)-thiazole + ADP + H(+). The protein operates within cofactor biosynthesis; thiamine diphosphate biosynthesis; 4-methyl-5-(2-phosphoethyl)-thiazole from 5-(2-hydroxyethyl)-4-methylthiazole: step 1/1. Catalyzes the phosphorylation of the hydroxyl group of 4-methyl-5-beta-hydroxyethylthiazole (THZ). In Haemophilus influenzae (strain ATCC 51907 / DSM 11121 / KW20 / Rd), this protein is Hydroxyethylthiazole kinase.